We begin with the raw amino-acid sequence, 470 residues long: Putative multidrug resistance protein MdtD (470 aa).

The Periplasmic portion of the chain corresponds to 1 to 11 (MTELPDNTRWQ). Residues 12-32 (LWIVALGFFMQSLDTTIVNTA) form a helical membrane-spanning segment. Topologically, residues 33–48 (LPSMAKSLGESPLHMH) are cytoplasmic. Residues 49-69 (MVVVSYVLTVAVMLPASGWLA) form a helical membrane-spanning segment. Topologically, residues 70–76 (DKIGVRN) are periplasmic. Residues 77-97 (IFFAAIVLFTLGSLFCALSGT) form a helical membrane-spanning segment. Over 98–101 (LNQL) the chain is Cytoplasmic. A helical transmembrane segment spans residues 102-124 (VLARVLQGVGGAMMVPVGRLTVM). Topologically, residues 125-137 (KIVPRAQYMAAMT) are periplasmic. Residues 138 to 158 (FVTLPGQIGPLLGPALGGVLV) form a helical membrane-spanning segment. Residues 159 to 164 (EYASWH) lie on the Cytoplasmic side of the membrane. A helical membrane pass occupies residues 165–185 (WIFLINIPVGIVGAMATFMLM). At 186–196 (PNYTIETRRFD) the chain is on the periplasmic side. A helical membrane pass occupies residues 197–217 (LPGFLLLAIGMAVLTLALDGS). At 218 to 221 (KSMG) the chain is on the cytoplasmic side. The chain crosses the membrane as a helical span at residues 222 to 242 (ISPWTLAGLAAGGAAAILLYL). At 243–262 (LHAKKNSGALFSLRLFRTPT) the chain is on the periplasmic side. Residues 263-283 (FSLGLLGSFAGRIGSGMLPFM) form a helical membrane-spanning segment. Residues 284 to 285 (TP) lie on the Cytoplasmic side of the membrane. The helical transmembrane segment at 286 to 306 (VFLQIGLGFSPFHAGLMMIPM) threads the bilayer. At 307–341 (VLGSMGMKRIVVQIVNRFGYRRVLVATTLGLALVS) the chain is on the periplasmic side. Residues 342-362 (LLFMSVALLGWYYLLPLVLLL) form a helical membrane-spanning segment. At 363–395 (QGMVNSARFSSMNTLTLKDLPDTLASSGNSLLS) the chain is on the cytoplasmic side. Residues 396–416 (MIMQLSMSIGVTIAGMLLGMF) form a helical membrane-spanning segment. The Periplasmic portion of the chain corresponds to 417-430 (GQQHIGIDSSATHH). The helical transmembrane segment at 431 to 451 (VFMYTWLCMAVIIALPAIIFA) threads the bilayer. Residues 452 to 470 (RVPNDTQQNMVISRRKRSL) lie on the Cytoplasmic side of the membrane.

This sequence belongs to the major facilitator superfamily. TCR/Tet family.

It is found in the cell inner membrane. The chain is Putative multidrug resistance protein MdtD from Salmonella heidelberg (strain SL476).